The primary structure comprises 547 residues: Sodium-coupled neutral amino acid transporter 4 (547 aa).

Topologically, residues 1–104 are extracellular; it reads MDPIELRSVN…GLSYAMANTG (104 aa). A Phosphoserine modification is found at Ser49. Residues 105-125 traverse the membrane as a helical segment; the sequence is IVLFVIMLLTVAILSLYSVHL. Residues 126-151 lie on the Cytoplasmic side of the membrane; that stretch reads LLKTAKEGGSLIYEKLGEKAFGWPGK. A helical membrane pass occupies residues 152-172; it reads IGAFISITMQNIGAMSSYLFI. At 173–195 the chain is on the extracellular side; that stretch reads IKYELPEVIRVFMGLEENTGEWY. Residues 196–216 traverse the membrane as a helical segment; the sequence is LNGNYLVLFVSVGIILPLSLL. The Cytoplasmic segment spans residues 217-220; the sequence is KNLG. A helical membrane pass occupies residues 221–241; that stretch reads YLGYTSGFSLTCMVFFVSVVI. Over 242–332 the chain is Extracellular; it reads YKKFQIPCPL…PKYFVFNSRT (91 aa). A disulfide bridge links Cys249 with Cys321. Residues Asn260, Asn264, and Asn276 are each glycosylated (N-linked (GlcNAc...) asparagine). A helical transmembrane segment spans residues 333–353; sequence AYAIPILAFAFVCHPEVLPIY. Over 354–369 the chain is Cytoplasmic; the sequence is SELKDRSRRKMQTVSN. Residues 370 to 390 form a helical membrane-spanning segment; it reads ISITGMLVMYLLAALFGYLSF. Residues 391–411 lie on the Extracellular side of the membrane; that stretch reads YGEVEDELLHAYSKVYTFDTA. Residues 412-432 form a helical membrane-spanning segment; that stretch reads LLMVRLAVLVAVTLTVPIVLF. The Cytoplasmic segment spans residues 433–453; that stretch reads PIRTSVITLLFPRRPFSWVKH. The chain crosses the membrane as a helical span at residues 454–474; that stretch reads FGIAAIIIALNNVLVILVPTI. Residues 475–476 are Extracellular-facing; it reads KY. The helical transmembrane segment at 477 to 497 threads the bilayer; the sequence is IFGFIGASSATMLIFILPAAF. The Cytoplasmic segment spans residues 498–514; it reads YLKLVKKEPLRSPQKIG. Residues 515–535 traverse the membrane as a helical segment; that stretch reads ALVFLVTGIIFMMGSMALIII. Topologically, residues 536–547 are extracellular; that stretch reads DWIYNPPNPDHH.

The protein belongs to the amino acid/polyamine transporter 2 family. In terms of processing, the disulfide bond plays an important role in substrate transport, but has no effect on trafficking to the cell surface. In terms of tissue distribution, expressed predominantly in liver, and at lower level in skeletal muscle.

It is found in the cell membrane. It localises to the cell projection. Its subcellular location is the microvillus membrane. It carries out the reaction L-alanine(in) + Na(+)(in) = L-alanine(out) + Na(+)(out). It catalyses the reaction L-serine(in) + Na(+)(in) = L-serine(out) + Na(+)(out). The catalysed reaction is glycine(in) + Na(+)(in) = glycine(out) + Na(+)(out). The enzyme catalyses L-cysteine(in) + Na(+)(in) = L-cysteine(out) + Na(+)(out). It carries out the reaction L-asparagine(in) + Na(+)(in) = L-asparagine(out) + Na(+)(out). It catalyses the reaction L-threonine(in) + Na(+)(in) = L-threonine(out) + Na(+)(out). The catalysed reaction is L-proline(in) + Na(+)(in) = L-proline(out) + Na(+)(out). The enzyme catalyses L-methionine(in) + Na(+)(in) = L-methionine(out) + Na(+)(out). It carries out the reaction L-glutamine(in) + Na(+)(in) = L-glutamine(out) + Na(+)(out). It catalyses the reaction L-histidine(in) + Na(+)(in) = L-histidine(out) + Na(+)(out). Symporter that cotransports neutral amino acids and sodium ions from the extraccellular to the intracellular side of the cell membrane. The transport is electrogenic, pH dependent and partially tolerates substitution of Na(+) by Li(+). Preferentially transports smaller amino acids, such as glycine, L-alanine, L-serine, L-asparagine and L-threonine, followed by L-cysteine, L-histidine, L-proline and L-glutamine and L-methionine. This is Sodium-coupled neutral amino acid transporter 4 from Rattus norvegicus (Rat).